Consider the following 312-residue polypeptide: Ribonuclease Z (312 aa).

7 residues coordinate Zn(2+): H61, H63, D65, H66, H148, D216, and H275. D65 serves as the catalytic Proton acceptor.

The protein belongs to the RNase Z family. Homodimer. Zn(2+) is required as a cofactor.

The enzyme catalyses Endonucleolytic cleavage of RNA, removing extra 3' nucleotides from tRNA precursor, generating 3' termini of tRNAs. A 3'-hydroxy group is left at the tRNA terminus and a 5'-phosphoryl group is left at the trailer molecule.. Functionally, zinc phosphodiesterase, which displays some tRNA 3'-processing endonuclease activity. Probably involved in tRNA maturation, by removing a 3'-trailer from precursor tRNA. The polypeptide is Ribonuclease Z (Clostridium tetani (strain Massachusetts / E88)).